The sequence spans 219 residues: MASTGLQILGIVLTLLGWVNALVSCALPMWKVTAFIGNSIVVAQMVWEGLWMSCVVQSTGQMQCKVYDSLLALPQDLQAARALCVVTLLIVLLGLLVYLAGAKCTTCVEDRNSKSRLVLISGIIFVISGVLTLIPVCWTAHSIIQDFYNPLVADAQKRELGASLYLGWAASGLLLLGGGLLCCACSSGGTQGPRHYMACYSTSVPHSRGPSEYPTKNYV.

The Cytoplasmic portion of the chain corresponds to 1-7 (MASTGLQ). Residues 8–28 (ILGIVLTLLGWVNALVSCALP) traverse the membrane as a helical segment. Topologically, residues 29–81 (MWKVTAFIGNSIVVAQMVWEGLWMSCVVQSTGQMQCKVYDSLLALPQDLQAAR) are extracellular. Residues 82 to 102 (ALCVVTLLIVLLGLLVYLAGA) traverse the membrane as a helical segment. Topologically, residues 103–116 (KCTTCVEDRNSKSR) are cytoplasmic. The helical transmembrane segment at 117–137 (LVLISGIIFVISGVLTLIPVC) threads the bilayer. Residues 138-163 (WTAHSIIQDFYNPLVADAQKRELGAS) are Extracellular-facing. The chain crosses the membrane as a helical span at residues 164 to 184 (LYLGWAASGLLLLGGGLLCCA). Residues 185-219 (CSSGGTQGPRHYMACYSTSVPHSRGPSEYPTKNYV) are Cytoplasmic-facing. A phosphoserine mark is found at S201, S203, S207, and S211. An interactions with TJP1, TJP2 and TJP3 region spans residues 218-219 (YV).

Belongs to the claudin family. Directly interacts with TJP1/ZO-1, TJP2/ZO-2 and TJP3/ZO-3. Interacts with CLDN1, CD81 and OCLN. Expressed mostly in embryonic tissues.

Its subcellular location is the cell junction. The protein localises to the tight junction. It localises to the cell membrane. Plays a major role in tight junction-specific obliteration of the intercellular space, through calcium-independent cell-adhesion activity. The chain is Claudin-6 (Cldn6) from Mus musculus (Mouse).